Here is a 330-residue protein sequence, read N- to C-terminus: ADP-L-glycero-D-manno-heptose-6-epimerase (330 aa).

Residues Phe11–Ile12, Asp32–Asn33, Lys39, Lys54, Glu75–Ser79, and Asn92 each bind NADP(+). Catalysis depends on Tyr139, which acts as the Proton acceptor. An NADP(+)-binding site is contributed by Lys143. Asn168 contacts substrate. Residues Val169 and Lys177 each coordinate NADP(+). The active-site Proton acceptor is the Lys177. Substrate is bound by residues Arg179, His186, Phe200–Tyr203, Arg213, and Tyr292.

The protein belongs to the NAD(P)-dependent epimerase/dehydratase family. HldD subfamily. In terms of assembly, homopentamer. NADP(+) is required as a cofactor.

It carries out the reaction ADP-D-glycero-beta-D-manno-heptose = ADP-L-glycero-beta-D-manno-heptose. It participates in nucleotide-sugar biosynthesis; ADP-L-glycero-beta-D-manno-heptose biosynthesis; ADP-L-glycero-beta-D-manno-heptose from D-glycero-beta-D-manno-heptose 7-phosphate: step 4/4. In terms of biological role, catalyzes the interconversion between ADP-D-glycero-beta-D-manno-heptose and ADP-L-glycero-beta-D-manno-heptose via an epimerization at carbon 6 of the heptose. The chain is ADP-L-glycero-D-manno-heptose-6-epimerase from Burkholderia cenocepacia (strain ATCC BAA-245 / DSM 16553 / LMG 16656 / NCTC 13227 / J2315 / CF5610) (Burkholderia cepacia (strain J2315)).